Consider the following 64-residue polypeptide: Large ribosomal subunit protein bL32 (64 aa).

Residues 1–28 (MAVQKSRVTPSRRGQRRSHDALTAKKLS) are disordered.

Belongs to the bacterial ribosomal protein bL32 family.

The polypeptide is Large ribosomal subunit protein bL32 (rpmF) (Xylella fastidiosa (strain 9a5c)).